Here is a 252-residue protein sequence, read N- to C-terminus: Chitooligosaccharide deacetylase (252 aa).

His-61 and His-125 together coordinate Mg(2+).

This sequence belongs to the YdjC deacetylase family. ChbG subfamily. Homodimer. It depends on Mg(2+) as a cofactor.

The protein localises to the cytoplasm. The enzyme catalyses N,N'-diacetylchitobiose + H2O = N-acetyl-beta-D-glucosaminyl-(1-&gt;4)-D-glucosamine + acetate. It carries out the reaction diacetylchitobiose-6'-phosphate + H2O = N'-monoacetylchitobiose-6'-phosphate + acetate. It participates in glycan degradation; chitin degradation. Its function is as follows. Involved in the degradation of chitin. ChbG is essential for growth on the acetylated chitooligosaccharides chitobiose and chitotriose but is dispensable for growth on cellobiose and chitosan dimer, the deacetylated form of chitobiose. Deacetylation of chitobiose-6-P and chitotriose-6-P is necessary for both the activation of the chb promoter by the regulatory protein ChbR and the hydrolysis of phosphorylated beta-glucosides by the phospho-beta-glucosidase ChbF. Catalyzes the removal of only one acetyl group from chitobiose-6-P to yield monoacetylchitobiose-6-P, the inducer of ChbR and the substrate of ChbF. The polypeptide is Chitooligosaccharide deacetylase (Salmonella paratyphi C (strain RKS4594)).